The chain runs to 395 residues: Carbohydrate sulfotransferase 5 (395 aa).

Residues 1–7 (MRLPRFS) lie on the Cytoplasmic side of the membrane. The helical; Signal-anchor for type II membrane protein transmembrane segment at 8-26 (STVMLSLLMVQTGILVFLV) threads the bilayer. The Lumenal segment spans residues 27–395 (SRQVPSSPAG…ASSTEKQPES (369 aa)). 49–55 (WRSGSSF) serves as a coordination point for 3'-phosphoadenylyl sulfate. N-linked (GlcNAc...) asparagine glycosylation is found at asparagine 116 and asparagine 142. Position 202–210 (202–210 (RDPRAVLRS)) interacts with 3'-phosphoadenylyl sulfate. 2 N-linked (GlcNAc...) asparagine glycosylation sites follow: asparagine 229 and asparagine 305.

Belongs to the sulfotransferase 1 family. Gal/GlcNAc/GalNAc subfamily. In terms of tissue distribution, expressed in cornea.

It is found in the golgi apparatus membrane. Functionally, sulfotransferase that utilizes 3'-phospho-5'-adenylyl sulfate (PAPS) as sulfonate donor to catalyze the transfer of sulfate to position 6 of non-reducing N-acetylglucosamine (GlcNAc) residues of keratan. Mediates sulfation of keratan in cornea. Keratan sulfate plays a central role in maintaining corneal transparency. Acts on the non-reducing terminal GlcNAc of short and long carbohydrate substrates that have poly-N-acetyllactosamine structures. May also have activity toward O-linked sugars of mucin-type acceptors. The protein is Carbohydrate sulfotransferase 5 (Chst5) of Mus musculus (Mouse).